The chain runs to 550 residues: Glutamyl-tRNA(Gln) amidotransferase subunit A, mitochondrial (550 aa).

Residues K79 and S171 each act as charge relay system in the active site. Catalysis depends on S195, which acts as the Acyl-ester intermediate. Residues 371-390 (EKDENKVDNDNDDDDDVDEN) form a disordered region.

Belongs to the amidase family. GatA subfamily. In terms of assembly, subunit of the heterotrimeric GatCAB amidotransferase (AdT) complex, composed of A, B and C subunits.

It is found in the mitochondrion. The enzyme catalyses L-glutamyl-tRNA(Gln) + L-glutamine + ATP + H2O = L-glutaminyl-tRNA(Gln) + L-glutamate + ADP + phosphate + H(+). In terms of biological role, allows the formation of correctly charged Gln-tRNA(Gln) through the transamidation of misacylated Glu-tRNA(Gln) in the mitochondria. The reaction takes place in the presence of glutamine and ATP through an activated gamma-phospho-Glu-tRNA(Gln). This chain is Glutamyl-tRNA(Gln) amidotransferase subunit A, mitochondrial, found in Dictyostelium discoideum (Social amoeba).